A 279-amino-acid chain; its full sequence is MALKSYKPTTPGQRGLVLIDRSELWKGRPVKTLVEGLIKTGGRNNTGRVTMWHKGGGAKRLYRIVDFKRRKFDVPAVVERIEYDPNRTAFIALVRYEDGELAYILAPQRLAVGDSVIAGAKTDVKPGNAMPFSGMPIGTIVHNVELKPGKGGQLARAAGTYAQFVGRDGGYAQIRLSSGELRMVRQECMATVGAVSNPDNSNQNFGKAGRMRHKGVRPTVRGVAMNPIDHPHGGGEGRTSGGRHPVTPWGKGTKGNRTRKSKASDKLIVRSRHAKKKGR.

A disordered region spans residues 224-279; that stretch reads AMNPIDHPHGGGEGRTSGGRHPVTPWGKGTKGNRTRKSKASDKLIVRSRHAKKKGR. The span at 269–279 shows a compositional bias: basic residues; sequence VRSRHAKKKGR.

This sequence belongs to the universal ribosomal protein uL2 family. Part of the 50S ribosomal subunit. Forms a bridge to the 30S subunit in the 70S ribosome.

One of the primary rRNA binding proteins. Required for association of the 30S and 50S subunits to form the 70S ribosome, for tRNA binding and peptide bond formation. It has been suggested to have peptidyltransferase activity; this is somewhat controversial. Makes several contacts with the 16S rRNA in the 70S ribosome. The protein is Large ribosomal subunit protein uL2 of Cereibacter sphaeroides (strain ATCC 17025 / ATH 2.4.3) (Rhodobacter sphaeroides).